Reading from the N-terminus, the 150-residue chain is Endoribonuclease YbeY (150 aa).

Zn(2+) is bound by residues H112, H116, and H122.

Belongs to the endoribonuclease YbeY family. Requires Zn(2+) as cofactor.

The protein resides in the cytoplasm. Single strand-specific metallo-endoribonuclease involved in late-stage 70S ribosome quality control and in maturation of the 3' terminus of the 16S rRNA. In Geobacter metallireducens (strain ATCC 53774 / DSM 7210 / GS-15), this protein is Endoribonuclease YbeY.